Consider the following 510-residue polypeptide: Hexose carrier protein HEX6 (510 aa).

Topologically, residues 1–22 (MAAGLAITSEGGQYNGRMTSFV) are cytoplasmic. The next 12 helical transmembrane spans lie at 23–43 (ALSCMMAAMGGVIFGYDIGVS), 83–103 (SFTSSLYVAGLVASFFASSVT), 118–128 (VFLAXAALGGA), 140–160 (VLLGVGVGFANQAVPLYLSEM), 169–189 (INNGFQFSVGIGALSANLINY), 202–222 (ISLAMAAVPAAILTFGALFLP), 284–304 (LVMAVAIPFFQQVTGINVIAF), 325–345 (IVTGLVGSASTFISMLIVDKL), 349–369 (ALFIFGGVQMFVAQIMVGSIM), 382–402 (GYAYIVLILICIYVAGFGWSW), 428–448 (AVSFLFTFVVAQTFLSMLCHF), and 451–471 (GIFFFFGGWVVVMTAFVHFLL). Residues 472–510 (PETKKVPIEKMDIVWRDHWFWKKIIGEEAAEENNKMEAA) are Cytoplasmic-facing.

It belongs to the major facilitator superfamily. Sugar transporter (TC 2.A.1.1) family.

It is found in the membrane. Active uptake of hexoses. Probable glucose/hydrogen symport. The sequence is that of Hexose carrier protein HEX6 (HEX6) from Ricinus communis (Castor bean).